Consider the following 650-residue polypeptide: Epithelial sodium channel subunit beta (650 aa).

The Cytoplasmic segment spans residues 1–95; the sequence is MLLHINPAYL…IICEGPKKKA (95 aa). A helical transmembrane segment spans residues 96–116; the sequence is MWFLLTLLFTALVCWQWGIFI. Residues 117–542 lie on the Extracellular side of the membrane; that stretch reads RTYLSWEVSV…GGQFGFWMGG (426 aa). Disulfide bonds link cysteine 143/cysteine 317, cysteine 229/cysteine 234, cysteine 241/cysteine 248, cysteine 294/cysteine 301, and cysteine 406/cysteine 458. N-linked (GlcNAc...) asparagine glycosylation occurs at asparagine 244. N-linked (GlcNAc...) asparagine glycosylation occurs at asparagine 305. A helical membrane pass occupies residues 543–563; sequence SVLCLIEFGEIIIDFVWITII. The Cytoplasmic portion of the chain corresponds to 564–650; the sequence is KLVALAKSLR…IESDSEGDAI (87 aa). The segment at 600-650 is disordered; it reads FQPDTAPRSPNTGPYPNEQALPIPGTPPPNYDSLRLQPLDVIESDSEGDAI. Positions 626 to 630 match the PY motif; recruits WW domain-containing proteins and is thereby required for ubiquitination and inhibition of the channel by NEDD4 and NEDD4L motif; that stretch reads PPPNY. A compositionally biased stretch (acidic residues) spans 641-650; that stretch reads IESDSEGDAI. 2 positions are modified to phosphoserine: serine 643 and serine 645.

The protein belongs to the amiloride-sensitive sodium channel (TC 1.A.6) family. SCNN1B subfamily. Component of the heterotrimeric epithelial sodium channel (ENaC) composed of an alpha/SCNN1A, a beta/SCNN1B and a gamma/SCNN1G subunit. An additional delta/SCNN1D subunit can replace the alpha/SCNN1A subunit to form an alternative channel with specific properties. Interacts with WWP1 (via WW domains). Interacts with WWP2 (via WW domains); inhibits the channel. Interacts with the full-length immature form of PCSK9 (pro-PCSK9). Interacts (N-glycosylated) with BPIFA1; the interaction is direct and inhibits the proteolytic processing of SCNN1A and SCNN1G and the activation of ENaC. In terms of processing, ubiquitinated. Can be ubiquitinated at multiple sites and undergo monoubiquitination and polyubiquitination. Ubiquitination by NEDD4 or NEDD4L inhibits the ENaC channel through endocytosis, intracellular retention and degradation of its individual subunits. However, some studies could not confirm the ubiquitination of this subunit of the ENaC. Post-translationally, phosphorylated on serine and threonine residues. Aldosterone and insulin increase the basal level of phosphorylation. N-glycosylated. N-glycosylation is required for interaction with BPIFA1.

It localises to the apical cell membrane. Its subcellular location is the cytoplasmic vesicle membrane. It carries out the reaction Na(+)(in) = Na(+)(out). With respect to regulation, originally identified and characterized by its inhibition by the diuretic drug amiloride. Its function is as follows. This is one of the three pore-forming subunits of the heterotrimeric epithelial sodium channel (ENaC), a critical regulator of sodium balance and fluid homeostasis. ENaC operates in epithelial tissues, where it mediates the electrodiffusion of sodium ions from extracellular fluid through the apical membrane of cells, with water following osmotically. It plays a key role in maintaining sodium homeostasis through electrogenic sodium reabsorption in the kidneys. Additionally, ENaC is essential for airway surface liquid homeostasis, which is crucial for proper mucus clearance. In Pan troglodytes (Chimpanzee), this protein is Epithelial sodium channel subunit beta.